A 273-amino-acid polypeptide reads, in one-letter code: Dermonecrotic toxin LsaSicTox-alphaIB1aii (273 aa).

Histidine 5 is an active-site residue. Residues glutamate 25 and aspartate 27 each contribute to the Mg(2+) site. The active-site Nucleophile is the histidine 41. 2 disulfides stabilise this stretch: cysteine 45–cysteine 51 and cysteine 47–cysteine 190. Aspartate 85 provides a ligand contact to Mg(2+).

The protein belongs to the arthropod phospholipase D family. Class II subfamily. Mg(2+) serves as cofactor. As to expression, expressed by the venom gland.

It localises to the secreted. The catalysed reaction is an N-(acyl)-sphingosylphosphocholine = an N-(acyl)-sphingosyl-1,3-cyclic phosphate + choline. It catalyses the reaction an N-(acyl)-sphingosylphosphoethanolamine = an N-(acyl)-sphingosyl-1,3-cyclic phosphate + ethanolamine. The enzyme catalyses a 1-acyl-sn-glycero-3-phosphocholine = a 1-acyl-sn-glycero-2,3-cyclic phosphate + choline. It carries out the reaction a 1-acyl-sn-glycero-3-phosphoethanolamine = a 1-acyl-sn-glycero-2,3-cyclic phosphate + ethanolamine. In terms of biological role, dermonecrotic toxins cleave the phosphodiester linkage between the phosphate and headgroup of certain phospholipids (sphingolipid and lysolipid substrates), forming an alcohol (often choline) and a cyclic phosphate. This toxin acts on sphingomyelin (SM). It may also act on ceramide phosphoethanolamine (CPE), lysophosphatidylcholine (LPC) and lysophosphatidylethanolamine (LPE), but not on lysophosphatidylserine (LPS), and lysophosphatidylglycerol (LPG). It acts by transphosphatidylation, releasing exclusively cyclic phosphate products as second products. Induces dermonecrosis, hemolysis, increased vascular permeability, edema, inflammatory response, and platelet aggregation. This is Dermonecrotic toxin LsaSicTox-alphaIB1aii from Loxosceles sabina (Tucson recluse spider).